A 131-amino-acid chain; its full sequence is Small ribosomal subunit protein uS8 (131 aa).

This sequence belongs to the universal ribosomal protein uS8 family. Part of the 30S ribosomal subunit. Contacts proteins S5 and S12.

Its function is as follows. One of the primary rRNA binding proteins, it binds directly to 16S rRNA central domain where it helps coordinate assembly of the platform of the 30S subunit. The protein is Small ribosomal subunit protein uS8 of Hyphomonas neptunium (strain ATCC 15444).